The primary structure comprises 269 residues: 5'-nucleotidase SurE (269 aa).

The a divalent metal cation site is built by Asp11, Asp12, Ser43, and Asn101.

It belongs to the SurE nucleotidase family. The cofactor is a divalent metal cation.

The protein localises to the cytoplasm. The catalysed reaction is a ribonucleoside 5'-phosphate + H2O = a ribonucleoside + phosphate. Functionally, nucleotidase that shows phosphatase activity on nucleoside 5'-monophosphates. In Synechococcus sp. (strain CC9902), this protein is 5'-nucleotidase SurE.